We begin with the raw amino-acid sequence, 254 residues long: 5'-nucleotidase SurE (254 aa).

The a divalent metal cation site is built by Asp-8, Asp-9, Ser-40, and Asn-93.

This sequence belongs to the SurE nucleotidase family. The cofactor is a divalent metal cation.

The protein resides in the cytoplasm. It carries out the reaction a ribonucleoside 5'-phosphate + H2O = a ribonucleoside + phosphate. In terms of biological role, nucleotidase that shows phosphatase activity on nucleoside 5'-monophosphates. In Rhizorhabdus wittichii (strain DSM 6014 / CCUG 31198 / JCM 15750 / NBRC 105917 / EY 4224 / RW1) (Sphingomonas wittichii), this protein is 5'-nucleotidase SurE.